We begin with the raw amino-acid sequence, 314 residues long: tRNA-cytidine(32) 2-sulfurtransferase (314 aa).

The short motif at 57–62 (SGGKDS) is the PP-loop motif element. Positions 132, 135, and 223 each coordinate [4Fe-4S] cluster.

It belongs to the TtcA family. Homodimer. The cofactor is Mg(2+). [4Fe-4S] cluster is required as a cofactor.

It is found in the cytoplasm. The catalysed reaction is cytidine(32) in tRNA + S-sulfanyl-L-cysteinyl-[cysteine desulfurase] + AH2 + ATP = 2-thiocytidine(32) in tRNA + L-cysteinyl-[cysteine desulfurase] + A + AMP + diphosphate + H(+). It participates in tRNA modification. In terms of biological role, catalyzes the ATP-dependent 2-thiolation of cytidine in position 32 of tRNA, to form 2-thiocytidine (s(2)C32). The sulfur atoms are provided by the cysteine/cysteine desulfurase (IscS) system. The sequence is that of tRNA-cytidine(32) 2-sulfurtransferase from Alkalilimnicola ehrlichii (strain ATCC BAA-1101 / DSM 17681 / MLHE-1).